The following is a 288-amino-acid chain: Proteasome subunit beta (288 aa).

Positions 1–57 are cleaved as a propeptide — removed in mature form; by autocatalysis; it reads MTAGDPMRLHPGHALSSFTEHLRALAPELLGPNRFAALDGATGSSGGTGAKDIAPHG. Residue Thr-58 is the Nucleophile of the active site.

It belongs to the peptidase T1B family. As to quaternary structure, the 20S proteasome core is composed of 14 alpha and 14 beta subunits that assemble into four stacked heptameric rings, resulting in a barrel-shaped structure. The two inner rings, each composed of seven catalytic beta subunits, are sandwiched by two outer rings, each composed of seven alpha subunits. The catalytic chamber with the active sites is on the inside of the barrel. Has a gated structure, the ends of the cylinder being occluded by the N-termini of the alpha-subunits. Is capped by the proteasome-associated ATPase, ARC.

It localises to the cytoplasm. The enzyme catalyses Cleavage of peptide bonds with very broad specificity.. The protein operates within protein degradation; proteasomal Pup-dependent pathway. With respect to regulation, the formation of the proteasomal ATPase ARC-20S proteasome complex, likely via the docking of the C-termini of ARC into the intersubunit pockets in the alpha-rings, may trigger opening of the gate for substrate entry. Interconversion between the open-gate and close-gate conformations leads to a dynamic regulation of the 20S proteasome proteolysis activity. Component of the proteasome core, a large protease complex with broad specificity involved in protein degradation. This Nocardia farcinica (strain IFM 10152) protein is Proteasome subunit beta.